A 491-amino-acid polypeptide reads, in one-letter code: UDP-N-acetylmuramate--L-alanine ligase (491 aa).

126–132 lines the ATP pocket; sequence GTHGKTT.

It belongs to the MurCDEF family.

The protein resides in the cytoplasm. The catalysed reaction is UDP-N-acetyl-alpha-D-muramate + L-alanine + ATP = UDP-N-acetyl-alpha-D-muramoyl-L-alanine + ADP + phosphate + H(+). It participates in cell wall biogenesis; peptidoglycan biosynthesis. Its function is as follows. Cell wall formation. In Klebsiella pneumoniae (strain 342), this protein is UDP-N-acetylmuramate--L-alanine ligase.